We begin with the raw amino-acid sequence, 616 residues long: Dihydroxy-acid dehydratase (616 aa).

D81 is a Mg(2+) binding site. C122 provides a ligand contact to [2Fe-2S] cluster. Residues D123 and K124 each coordinate Mg(2+). K124 bears the N6-carboxylysine mark. C195 serves as a coordination point for [2Fe-2S] cluster. E491 provides a ligand contact to Mg(2+). The active-site Proton acceptor is S517.

It belongs to the IlvD/Edd family. In terms of assembly, homodimer. It depends on [2Fe-2S] cluster as a cofactor. The cofactor is Mg(2+).

The catalysed reaction is (2R)-2,3-dihydroxy-3-methylbutanoate = 3-methyl-2-oxobutanoate + H2O. The enzyme catalyses (2R,3R)-2,3-dihydroxy-3-methylpentanoate = (S)-3-methyl-2-oxopentanoate + H2O. It participates in amino-acid biosynthesis; L-isoleucine biosynthesis; L-isoleucine from 2-oxobutanoate: step 3/4. It functions in the pathway amino-acid biosynthesis; L-valine biosynthesis; L-valine from pyruvate: step 3/4. Functions in the biosynthesis of branched-chain amino acids. Catalyzes the dehydration of (2R,3R)-2,3-dihydroxy-3-methylpentanoate (2,3-dihydroxy-3-methylvalerate) into 2-oxo-3-methylpentanoate (2-oxo-3-methylvalerate) and of (2R)-2,3-dihydroxy-3-methylbutanoate (2,3-dihydroxyisovalerate) into 2-oxo-3-methylbutanoate (2-oxoisovalerate), the penultimate precursor to L-isoleucine and L-valine, respectively. The polypeptide is Dihydroxy-acid dehydratase (Escherichia coli (strain 55989 / EAEC)).